Reading from the N-terminus, the 106-residue chain is Putative defensin-like protein 224 (106 aa).

A signal peptide spans 1–23 (MKTLSLFFTLVILISSCVSNLMA). 3 disulfides stabilise this stretch: C60–C78, C64–C84, and C68–C86.

It belongs to the DEFL family.

It localises to the secreted. This chain is Putative defensin-like protein 224, found in Arabidopsis thaliana (Mouse-ear cress).